The following is a 173-amino-acid chain: Photosystem I reaction center subunit XI (173 aa).

A run of 2 helical transmembrane segments spans residues 92 to 112 (LAGLLAAIGLVVLLTGALSLY) and 148 to 168 (LIGGIGGAVVAYFLTSNLGII).

Belongs to the PsaL family.

It localises to the cellular thylakoid membrane. The polypeptide is Photosystem I reaction center subunit XI (Nostoc punctiforme (strain ATCC 29133 / PCC 73102)).